A 124-amino-acid polypeptide reads, in one-letter code: Small ribosomal subunit protein uS11 (124 aa).

It belongs to the universal ribosomal protein uS11 family. As to quaternary structure, part of the 30S ribosomal subunit. Interacts with proteins S7 and S18. Binds to IF-3.

Its function is as follows. Located on the platform of the 30S subunit, it bridges several disparate RNA helices of the 16S rRNA. Forms part of the Shine-Dalgarno cleft in the 70S ribosome. In Anaplasma phagocytophilum (strain HZ), this protein is Small ribosomal subunit protein uS11.